The chain runs to 91 residues: MNASNWSLYLILCENSAFYCGISPNPQQRLAAHTAGKGAKYTRVFKPVAMRIVAGGMDKGTALRQEIAVKKLTAAQKRKLWEQAEKMPSET.

One can recognise a GIY-YIG domain in the interval 4-83; the sequence is SNWSLYLILC…AAQKRKLWEQ (80 aa).

Belongs to the UPF0213 family.

In Neisseria meningitidis serogroup A / serotype 4A (strain DSM 15465 / Z2491), this protein is UPF0213 protein NMA2126.